A 292-amino-acid chain; its full sequence is Tumor necrosis factor alpha-induced protein 8-like protein 3 (292 aa).

The segment at 81 to 107 (DAQPAARSMDSDSGEQSEGEPVTAAGP) is disordered. Positions 109 to 292 (VFSSKSLALQ…INKLLDEKVL (184 aa)) are binding to phosphoinositides.

It belongs to the TNFAIP8 family. In terms of tissue distribution, widely expressed (at protein level). Highly expressed in most carcinoma cell lines.

The protein resides in the cytoplasm. Its subcellular location is the cell membrane. Functionally, acts as a lipid transfer protein. Preferentially captures and shuttles two lipid second messengers, i.e., phosphatidylinositol 4,5- bisphosphate and phosphatidylinositol 3,4,5-trisphosphate and increases their levels in the plasma membrane. Additionally, may also function as a lipid-presenting protein to enhance the activity of the PI3K-AKT and MEK-ERK pathways. May act as a regulator of tumorigenesis through its activation of phospholipid signaling. The sequence is that of Tumor necrosis factor alpha-induced protein 8-like protein 3 (TNFAIP8L3) from Homo sapiens (Human).